Consider the following 71-residue polypeptide: Small ribosomal subunit protein bS21 (71 aa).

The disordered stretch occupies residues 47 to 71 (RENATRAKRHAKRVARENARNTRLY). The span at 60–71 (VARENARNTRLY) shows a compositional bias: basic and acidic residues.

It belongs to the bacterial ribosomal protein bS21 family.

In Actinobacillus succinogenes (strain ATCC 55618 / DSM 22257 / CCUG 43843 / 130Z), this protein is Small ribosomal subunit protein bS21.